Consider the following 377-residue polypeptide: Nitric oxide reductase FlRd-NAD(+) reductase (377 aa).

It belongs to the FAD-dependent oxidoreductase family. FAD serves as cofactor.

The protein localises to the cytoplasm. It catalyses the reaction 2 reduced [nitric oxide reductase rubredoxin domain] + NAD(+) + H(+) = 2 oxidized [nitric oxide reductase rubredoxin domain] + NADH. The protein operates within nitrogen metabolism; nitric oxide reduction. Functionally, one of at least two accessory proteins for anaerobic nitric oxide (NO) reductase. Reduces the rubredoxin moiety of NO reductase. The chain is Nitric oxide reductase FlRd-NAD(+) reductase from Salmonella dublin (strain CT_02021853).